The primary structure comprises 258 residues: Triosephosphate isomerase (258 aa).

11–13 (NWK) is a binding site for substrate. His101 (electrophile) is an active-site residue. Glu173 (proton acceptor) is an active-site residue. Residues Gly179, Ser219, and 240-241 (GG) contribute to the substrate site.

This sequence belongs to the triosephosphate isomerase family. As to quaternary structure, homodimer.

Its subcellular location is the cytoplasm. It catalyses the reaction D-glyceraldehyde 3-phosphate = dihydroxyacetone phosphate. Its pathway is carbohydrate biosynthesis; gluconeogenesis. The protein operates within carbohydrate degradation; glycolysis; D-glyceraldehyde 3-phosphate from glycerone phosphate: step 1/1. Functionally, involved in the gluconeogenesis. Catalyzes stereospecifically the conversion of dihydroxyacetone phosphate (DHAP) to D-glyceraldehyde-3-phosphate (G3P). This chain is Triosephosphate isomerase, found in Streptomyces avermitilis (strain ATCC 31267 / DSM 46492 / JCM 5070 / NBRC 14893 / NCIMB 12804 / NRRL 8165 / MA-4680).